The primary structure comprises 169 residues: MDPEHAKPESSEAPSGNLKQPETAAALSLILGALACFIITQANESFITITSLEICIVVFFILIYVLTLHHLLTYLHWPLLDLTNSIITAVFLSVVAILAMQEKKRRHLLYVGGSLCLTAVIVCCIDAFVVTTKMRTNLKRFLGVEVERKLSPAKDAYPETGPDAPQRPA.

The region spanning 17–135 is the MARVEL domain; sequence NLKQPETAAA…DAFVVTTKMR (119 aa). 4 consecutive transmembrane segments (helical) span residues 22 to 42, 46 to 66, 79 to 99, and 110 to 130; these read ETAA…ITQA, FITI…IYVL, LLDL…AILA, and YVGG…AFVV.

It belongs to the chemokine-like factor family. As to expression, highly expressed in testis.

Its subcellular location is the membrane. The chain is CKLF-like MARVEL transmembrane domain-containing protein 1 (CMTM1) from Homo sapiens (Human).